A 1339-amino-acid chain; its full sequence is Tuberous sclerosis 2 protein homolog (1339 aa).

At S1036 the chain carries Phosphoserine. Positions 1109 to 1303 constitute a Rap-GAP domain; sequence ILANTNPSED…AERLRQLKRL (195 aa).

Interacts with tsc1.

It localises to the cytoplasm. The protein resides in the nucleus. Its function is as follows. Together with tsc1, required for uptake of various amino acids from the environment and for proper conjugation. Involved in induction of gene expression of permeases and genes required for meiosis upon nitrogen starvation. May act as a GTPase-activating protein (GAP) for the small GTPase rhb1. The sequence is that of Tuberous sclerosis 2 protein homolog (tsc2) from Schizosaccharomyces pombe (strain 972 / ATCC 24843) (Fission yeast).